Consider the following 156-residue polypeptide: Large ribosomal subunit protein uL15 (156 aa).

A disordered region spans residues 26–46 (GIGCGKGKTSGRGHKGQKARS). The span at 34-43 (TSGRGHKGQK) shows a compositional bias: basic residues.

The protein belongs to the universal ribosomal protein uL15 family. Part of the 50S ribosomal subunit.

Functionally, binds to the 23S rRNA. This is Large ribosomal subunit protein uL15 from Ehrlichia canis (strain Jake).